A 34-amino-acid polypeptide reads, in one-letter code: Aspartate aminotransferase 2 (34 aa).

Belongs to the class-I pyridoxal-phosphate-dependent aminotransferase family. In terms of assembly, homodimer. It depends on pyridoxal 5'-phosphate as a cofactor.

The catalysed reaction is L-aspartate + 2-oxoglutarate = oxaloacetate + L-glutamate. Functionally, important for the metabolism of amino acids and Krebs-cycle related organic acids. In plants, it is involved in nitrogen metabolism and in aspects of carbon and energy metabolism. The polypeptide is Aspartate aminotransferase 2 (Pseudotsuga menziesii (Douglas-fir)).